Consider the following 92-residue polypeptide: uncharacterized protein (92 aa).

This is an uncharacterized protein from Archaeoglobus fulgidus (strain ATCC 49558 / DSM 4304 / JCM 9628 / NBRC 100126 / VC-16).